A 101-amino-acid polypeptide reads, in one-letter code: Small ribosomal subunit protein bS6 (101 aa).

The protein belongs to the bacterial ribosomal protein bS6 family.

Functionally, binds together with bS18 to 16S ribosomal RNA. This is Small ribosomal subunit protein bS6 from Arthrobacter sp. (strain FB24).